Consider the following 214-residue polypeptide: Pyridoxine/pyridoxamine 5'-phosphate oxidase (214 aa).

Substrate contacts are provided by residues 8–11 and Lys-66; that span reads RINY. FMN is bound by residues 61–66, 76–77, Arg-82, Lys-83, and Gln-105; these read RIVLIK and FT. Substrate is bound by residues Tyr-123, Arg-127, and Ser-131. FMN is bound by residues 140 to 141 and Trp-184; that span reads QS. 190–192 contacts substrate; that stretch reads RLH. Residue Arg-194 participates in FMN binding.

It belongs to the pyridoxamine 5'-phosphate oxidase family. In terms of assembly, homodimer. FMN is required as a cofactor.

The catalysed reaction is pyridoxamine 5'-phosphate + O2 + H2O = pyridoxal 5'-phosphate + H2O2 + NH4(+). It catalyses the reaction pyridoxine 5'-phosphate + O2 = pyridoxal 5'-phosphate + H2O2. Its pathway is cofactor metabolism; pyridoxal 5'-phosphate salvage; pyridoxal 5'-phosphate from pyridoxamine 5'-phosphate: step 1/1. The protein operates within cofactor metabolism; pyridoxal 5'-phosphate salvage; pyridoxal 5'-phosphate from pyridoxine 5'-phosphate: step 1/1. Catalyzes the oxidation of either pyridoxine 5'-phosphate (PNP) or pyridoxamine 5'-phosphate (PMP) into pyridoxal 5'-phosphate (PLP). The chain is Pyridoxine/pyridoxamine 5'-phosphate oxidase from Burkholderia orbicola (strain MC0-3).